The primary structure comprises 332 residues: Nucleotide-binding protein RC1_2868 (332 aa).

Residues 1 to 27 (MTGQPLTMETAAGADAGTGAATHPADG) are disordered. Residues 10–22 (TAAGADAGTGAAT) show a composition bias toward low complexity. 36–43 (GMSGGGLS) contributes to the ATP binding site. GTP is bound at residue 82-85 (DSRT). Composition is skewed to basic and acidic residues over residues 302 to 312 (GHRDLDRRHPA) and 322 to 332 (VASRETPEEHR). A disordered region spans residues 302–332 (GHRDLDRRHPAPEPAPPWREVASRETPEEHR).

This sequence belongs to the RapZ-like family.

Its function is as follows. Displays ATPase and GTPase activities. This is Nucleotide-binding protein RC1_2868 from Rhodospirillum centenum (strain ATCC 51521 / SW).